Here is a 900-residue protein sequence, read N- to C-terminus: Alanine--tRNA ligase (900 aa).

The Zn(2+) site is built by His-580, His-584, Cys-683, and His-687.

This sequence belongs to the class-II aminoacyl-tRNA synthetase family. Zn(2+) is required as a cofactor.

The protein localises to the cytoplasm. It carries out the reaction tRNA(Ala) + L-alanine + ATP = L-alanyl-tRNA(Ala) + AMP + diphosphate. Functionally, catalyzes the attachment of alanine to tRNA(Ala) in a two-step reaction: alanine is first activated by ATP to form Ala-AMP and then transferred to the acceptor end of tRNA(Ala). Also edits incorrectly charged Ser-tRNA(Ala) and Gly-tRNA(Ala) via its editing domain. The sequence is that of Alanine--tRNA ligase from Mycolicibacterium paratuberculosis (strain ATCC BAA-968 / K-10) (Mycobacterium paratuberculosis).